Here is a 36-residue protein sequence, read N- to C-terminus: Thrombin-like enzyme TLP (36 aa).

The Peptidase S1 domain maps to 1 to 36 (IGGFECNEHEHRSLVYLYNSAGFFCAGTLLNHEWVV).

The protein belongs to the peptidase S1 family. Snake venom subfamily. In terms of assembly, monomer. As to expression, expressed by the venom gland.

It localises to the secreted. Thrombin-like snake venom serine protease. Shows strong hydrolytic activity towards Boc-Asp(oBzl)-Pro-Arg-MCA, a synthetic substrate for thrombin. The chain is Thrombin-like enzyme TLP from Naja naja (Indian cobra).